Consider the following 255-residue polypeptide: 20 kDa chaperonin, chloroplastic (255 aa).

The N-terminal 53 residues, 1-53 (MAATHLTSTSSLTINTLPSFEGLRSASGISKINVSVAYPSFTSRSFRGLVVRA), are a transit peptide targeting the chloroplast. Cpn-10 domain stretches follow at residues 54-156 (ASIT…ILET) and 157-255 (DDVK…AVLS).

Belongs to the GroES chaperonin family. In terms of assembly, forms stable complexes with CPN60 in the presence of ATP.

It localises to the plastid. The protein localises to the chloroplast. Its function is as follows. Seems to function only as a co-chaperone, along with cpn60, and in certain cases is essential for the discharge of biologically active proteins from cpn60. The protein is 20 kDa chaperonin, chloroplastic (CPN21) of Spinacia oleracea (Spinach).